The following is an 83-amino-acid chain: Aminoacyl carrier protein (83 aa).

The region spanning 1-80 is the Carrier domain; the sequence is MNATIREILA…DTVKLILDGK (80 aa). Serine 35 is modified (O-(pantetheine 4'-phosphoryl)serine).

Post-translationally, 4'-phosphopantetheine is transferred from CoA to a specific serine of the apo-form of this carrier protein.

Functionally, aminoacyl carrier protein. Can be charged with L-alanine, L-glycine or L-serine, via the formation of a thioester bond between the amino acid and the 4'-phosphopantetheinyl prosthetic group, catalyzed by the Atu2573 ligase. The chain is Aminoacyl carrier protein from Agrobacterium fabrum (strain C58 / ATCC 33970) (Agrobacterium tumefaciens (strain C58)).